A 367-amino-acid chain; its full sequence is Outer membrane protein P2 (367 aa).

An N-terminal signal peptide occupies residues 1-20 (MKKTLAALIVGAFAASAANA).

This sequence belongs to the Gram-negative porin family. In terms of assembly, homotrimer.

Its subcellular location is the cell outer membrane. Forms pores that allow passive diffusion of small molecules across the outer membrane. The chain is Outer membrane protein P2 (ompP2) from Haemophilus influenzae.